Here is a 24-residue protein sequence, read N- to C-terminus: M-ectatotoxin-Eb2b (24 aa).

As to expression, expressed by the venom gland.

Its subcellular location is the secreted. Antimicrobial peptide active against Gram-negative bacterium E.coli MH1 (MIC=2.5 uM) and P.aeruginosa PAO1 (MIC=10 uM) and against Gram-positive bacterium A.globiformis VKM Ac-1112 (MIC=0.6 uM). The sequence is that of M-ectatotoxin-Eb2b from Ectatomma brunneum (Ant).